Consider the following 154-residue polypeptide: Large ribosomal subunit protein uL13 (154 aa).

The protein belongs to the universal ribosomal protein uL13 family. As to quaternary structure, part of the 50S ribosomal subunit.

Its function is as follows. This protein is one of the early assembly proteins of the 50S ribosomal subunit, although it is not seen to bind rRNA by itself. It is important during the early stages of 50S assembly. This is Large ribosomal subunit protein uL13 from Allorhizobium ampelinum (strain ATCC BAA-846 / DSM 112012 / S4) (Agrobacterium vitis (strain S4)).